The primary structure comprises 225 residues: Small ribosomal subunit protein uS2 (225 aa).

Basic and acidic residues predominate over residues 1–13; sequence MAEAKPALEKEAA. Residues 1–33 are disordered; it reads MAEAKPALEKEAAVKTGSIPSESEDETASHKEG.

This sequence belongs to the universal ribosomal protein uS2 family.

In Methanosarcina acetivorans (strain ATCC 35395 / DSM 2834 / JCM 12185 / C2A), this protein is Small ribosomal subunit protein uS2.